The primary structure comprises 421 residues: NAD-specific glutamate dehydrogenase (421 aa).

Residues Lys-70 and Lys-94 each coordinate substrate. The active-site Proton donor is Lys-106. Thr-191 and Asn-222 together coordinate NAD(+). Ser-355 contributes to the substrate binding site.

The protein belongs to the Glu/Leu/Phe/Val dehydrogenases family. Homohexamer.

It carries out the reaction L-glutamate + NAD(+) + H2O = 2-oxoglutarate + NH4(+) + NADH + H(+). It participates in amino-acid degradation; L-glutamate degradation via hydroxyglutarate pathway; crotonoyl-CoA from L-glutamate: step 1/5. The protein is NAD-specific glutamate dehydrogenase of Peptoniphilus asaccharolyticus (Peptostreptococcus asaccharolyticus).